Here is a 305-residue protein sequence, read N- to C-terminus: Superkiller complex protein 8 (305 aa).

Met1 is subject to N-acetylmethionine. Thr2 carries the N-acetylthreonine; in WD repeat-containing protein 61, N-terminally processed modification. WD repeat units lie at residues 14-57, 62-101, 104-143, 146-187, 188-227, 230-269, and 272-305; these read AHDD…LDLQ, GHQL…QIKS, AGPV…KEYS, TRGK…HTLE, GHAM…LAGT, GHAS…CVHT, and DHQD…DCPI.

It belongs to the SKI8 family. In terms of assembly, component of the PAF1 complex, which consists of CDC73, PAF1, LEO1, CTR9, RTF1 and SKIC8. The PAF1 complex interacts with PHF5A. Within the PAF1 complex interacts directly with PHF5A. Component of the SKI complex which consists of SKIC2, SKIC3 and SKIC8.

It localises to the nucleus. The protein localises to the cytoplasm. In terms of biological role, component of the PAF1 complex (PAF1C) which has multiple functions during transcription by RNA polymerase II and is implicated in regulation of development and maintenance of embryonic stem cell pluripotency. PAF1C associates with RNA polymerase II through interaction with POLR2A CTD non-phosphorylated and 'Ser-2'- and 'Ser-5'-phosphorylated forms and is involved in transcriptional elongation, acting both independently and synergistically with TCEA1 and in cooperation with the DSIF complex and HTATSF1. PAF1C is required for transcription of Hox and Wnt target genes. PAF1C is involved in hematopoiesis and stimulates transcriptional activity of KMT2A/MLL1; it promotes leukemogenesis through association with KMT2A/MLL1-rearranged oncoproteins, such as KMT2A/MLL1-MLLT3/AF9 and KMT2A/MLL1-MLLT1/ENL. PAF1C is involved in histone modifications such as ubiquitination of histone H2B and methylation on histone H3 'Lys-4' (H3K4me3). PAF1C recruits the RNF20/40 E3 ubiquitin-protein ligase complex and the E2 enzyme UBE2A or UBE2B to chromatin which mediate monoubiquitination of 'Lys-120' of histone H2B (H2BK120ub1); UB2A/B-mediated H2B ubiquitination is proposed to be coupled to transcription. PAF1C is involved in mRNA 3' end formation probably through association with cleavage and poly(A) factors. In case of infection by influenza A strain H3N2, PAF1C associates with viral NS1 protein, thereby regulating gene transcription. Required for mono- and trimethylation on histone H3 'Lys-4' (H3K4me3), dimethylation on histone H3 'Lys-79' (H3K4me3). Required for Hox gene transcription. Also acts as a component of the SKI complex, a multiprotein complex that assists the RNA-degrading exosome during the mRNA decay and quality-control pathways. The SKI complex catalyzes mRNA extraction from 80S ribosomal complexes in the 3'-5' direction and channels mRNA to the cytosolic exosome for degradation. SKI-mediated extraction of mRNA from stalled ribosomes allow binding of the Pelota-HBS1L complex and subsequent ribosome disassembly by ABCE1 for ribosome recycling. The chain is Superkiller complex protein 8 from Homo sapiens (Human).